Consider the following 196-residue polypeptide: Phosphoheptose isomerase (196 aa).

One can recognise an SIS domain in the interval 36–195; it reads VIQAYKLGKK…EKELFGEKVD (160 aa). 51–53 is a binding site for substrate; sequence NGG. Residues H60 and E64 each contribute to the Zn(2+) site. Substrate contacts are provided by residues E64, 93–94, 119–121, S124, and Q171; these read ND and STS. Zn(2+) contacts are provided by Q171 and H179.

This sequence belongs to the SIS family. GmhA subfamily. Zn(2+) serves as cofactor.

The protein localises to the cytoplasm. It catalyses the reaction 2 D-sedoheptulose 7-phosphate = D-glycero-alpha-D-manno-heptose 7-phosphate + D-glycero-beta-D-manno-heptose 7-phosphate. Its pathway is carbohydrate biosynthesis; D-glycero-D-manno-heptose 7-phosphate biosynthesis; D-glycero-alpha-D-manno-heptose 7-phosphate and D-glycero-beta-D-manno-heptose 7-phosphate from sedoheptulose 7-phosphate: step 1/1. Catalyzes the isomerization of sedoheptulose 7-phosphate in D-glycero-D-manno-heptose 7-phosphate. The polypeptide is Phosphoheptose isomerase (Clostridium acetobutylicum (strain ATCC 824 / DSM 792 / JCM 1419 / IAM 19013 / LMG 5710 / NBRC 13948 / NRRL B-527 / VKM B-1787 / 2291 / W)).